The primary structure comprises 121 residues: Small ribosomal subunit protein uS13 (121 aa).

Positions 94 to 121 (GLPLRGQRTRTNARTRKGPRRAAQSLKK) are disordered.

The protein belongs to the universal ribosomal protein uS13 family. Part of the 30S ribosomal subunit. Forms a loose heterodimer with protein S19. Forms two bridges to the 50S subunit in the 70S ribosome.

In terms of biological role, located at the top of the head of the 30S subunit, it contacts several helices of the 16S rRNA. In the 70S ribosome it contacts the 23S rRNA (bridge B1a) and protein L5 of the 50S subunit (bridge B1b), connecting the 2 subunits; these bridges are implicated in subunit movement. Contacts the tRNAs in the A and P-sites. This chain is Small ribosomal subunit protein uS13, found in Paraburkholderia phytofirmans (strain DSM 17436 / LMG 22146 / PsJN) (Burkholderia phytofirmans).